Reading from the N-terminus, the 157-residue chain is SsrA-binding protein (157 aa).

Belongs to the SmpB family.

The protein resides in the cytoplasm. Functionally, required for rescue of stalled ribosomes mediated by trans-translation. Binds to transfer-messenger RNA (tmRNA), required for stable association of tmRNA with ribosomes. tmRNA and SmpB together mimic tRNA shape, replacing the anticodon stem-loop with SmpB. tmRNA is encoded by the ssrA gene; the 2 termini fold to resemble tRNA(Ala) and it encodes a 'tag peptide', a short internal open reading frame. During trans-translation Ala-aminoacylated tmRNA acts like a tRNA, entering the A-site of stalled ribosomes, displacing the stalled mRNA. The ribosome then switches to translate the ORF on the tmRNA; the nascent peptide is terminated with the 'tag peptide' encoded by the tmRNA and targeted for degradation. The ribosome is freed to recommence translation, which seems to be the essential function of trans-translation. The chain is SsrA-binding protein from Lacticaseibacillus paracasei (strain ATCC 334 / BCRC 17002 / CCUG 31169 / CIP 107868 / KCTC 3260 / NRRL B-441) (Lactobacillus paracasei).